The following is an 809-amino-acid chain: Phenylalanine--tRNA ligase beta subunit (809 aa).

The 116-residue stretch at 39–154 (APPTSKIVVG…EDTPVGQDIR (116 aa)) folds into the tRNA-binding domain. One can recognise a B5 domain in the interval 405–480 (PQRAPVKMRV…RIYGFEKIPA (76 aa)). Positions 458, 464, 467, and 468 each coordinate Mg(2+). The FDX-ACB domain maps to 707-808 (SKFPPVRRDI…RMARAGARLR (102 aa)).

It belongs to the phenylalanyl-tRNA synthetase beta subunit family. Type 1 subfamily. In terms of assembly, tetramer of two alpha and two beta subunits. Requires Mg(2+) as cofactor.

It localises to the cytoplasm. The enzyme catalyses tRNA(Phe) + L-phenylalanine + ATP = L-phenylalanyl-tRNA(Phe) + AMP + diphosphate + H(+). This is Phenylalanine--tRNA ligase beta subunit from Burkholderia lata (strain ATCC 17760 / DSM 23089 / LMG 22485 / NCIMB 9086 / R18194 / 383).